The following is a 165-amino-acid chain: 6,7-dimethyl-8-ribityllumazine synthase (165 aa).

5-amino-6-(D-ribitylamino)uracil-binding positions include Trp26, 58-60 (SIE), and 80-82 (VVI). 85-86 (GT) contributes to the (2S)-2-hydroxy-3-oxobutyl phosphate binding site. His88 (proton donor) is an active-site residue. Asn113 contacts 5-amino-6-(D-ribitylamino)uracil. A (2S)-2-hydroxy-3-oxobutyl phosphate-binding site is contributed by Arg127.

Belongs to the DMRL synthase family.

The enzyme catalyses (2S)-2-hydroxy-3-oxobutyl phosphate + 5-amino-6-(D-ribitylamino)uracil = 6,7-dimethyl-8-(1-D-ribityl)lumazine + phosphate + 2 H2O + H(+). Its pathway is cofactor biosynthesis; riboflavin biosynthesis; riboflavin from 2-hydroxy-3-oxobutyl phosphate and 5-amino-6-(D-ribitylamino)uracil: step 1/2. Its function is as follows. Catalyzes the formation of 6,7-dimethyl-8-ribityllumazine by condensation of 5-amino-6-(D-ribitylamino)uracil with 3,4-dihydroxy-2-butanone 4-phosphate. This is the penultimate step in the biosynthesis of riboflavin. The sequence is that of 6,7-dimethyl-8-ribityllumazine synthase from Saccharopolyspora erythraea (strain ATCC 11635 / DSM 40517 / JCM 4748 / NBRC 13426 / NCIMB 8594 / NRRL 2338).